The following is a 55-amino-acid chain: Large ribosomal subunit protein bL33 (55 aa).

This sequence belongs to the bacterial ribosomal protein bL33 family.

The chain is Large ribosomal subunit protein bL33 from Sinorhizobium fredii (strain NBRC 101917 / NGR234).